The primary structure comprises 663 residues: Bifunctional polymyxin resistance protein ArnA (663 aa).

The interval 1 to 307 is formyltransferase ArnAFT; it reads MSPKAVVFAY…EFGLVEGSQL (307 aa). Catalysis depends on His-106, which acts as the Proton donor; for formyltransferase activity. (6R)-10-formyltetrahydrofolate-binding positions include Arg-116 and 138 to 142; that span reads VKRAD. The interval 317–663 is dehydrogenase ArnADH; it reads RRTRVLILGV…EAMAEKADMR (347 aa). Residues Asp-350 and 371–372 contribute to the NAD(+) site; that span reads DI. UDP-alpha-D-glucuronate contacts are provided by residues Ala-396, Tyr-401, and 435 to 436; that span reads TS. Residue Glu-437 is the Proton acceptor; for decarboxylase activity of the active site. Residues Arg-463, Asn-494, 528–537, and Tyr-615 contribute to the UDP-alpha-D-glucuronate site; that span reads RLVDGGAQKR. Arg-621 (proton donor; for decarboxylase activity) is an active-site residue.

This sequence in the N-terminal section; belongs to the Fmt family. UDP-L-Ara4N formyltransferase subfamily. It in the C-terminal section; belongs to the NAD(P)-dependent epimerase/dehydratase family. UDP-glucuronic acid decarboxylase subfamily. In terms of assembly, homohexamer, formed by a dimer of trimers.

The catalysed reaction is UDP-alpha-D-glucuronate + NAD(+) = UDP-beta-L-threo-pentopyranos-4-ulose + CO2 + NADH. It catalyses the reaction UDP-4-amino-4-deoxy-beta-L-arabinose + (6R)-10-formyltetrahydrofolate = UDP-4-deoxy-4-formamido-beta-L-arabinose + (6S)-5,6,7,8-tetrahydrofolate + H(+). Its pathway is nucleotide-sugar biosynthesis; UDP-4-deoxy-4-formamido-beta-L-arabinose biosynthesis; UDP-4-deoxy-4-formamido-beta-L-arabinose from UDP-alpha-D-glucuronate: step 1/3. The protein operates within nucleotide-sugar biosynthesis; UDP-4-deoxy-4-formamido-beta-L-arabinose biosynthesis; UDP-4-deoxy-4-formamido-beta-L-arabinose from UDP-alpha-D-glucuronate: step 3/3. It participates in bacterial outer membrane biogenesis; lipopolysaccharide biosynthesis. Functionally, bifunctional enzyme that catalyzes the oxidative decarboxylation of UDP-glucuronic acid (UDP-GlcUA) to UDP-4-keto-arabinose (UDP-Ara4O) and the addition of a formyl group to UDP-4-amino-4-deoxy-L-arabinose (UDP-L-Ara4N) to form UDP-L-4-formamido-arabinose (UDP-L-Ara4FN). The modified arabinose is attached to lipid A and is required for resistance to polymyxin and cationic antimicrobial peptides. The polypeptide is Bifunctional polymyxin resistance protein ArnA (Pseudomonas savastanoi pv. phaseolicola (strain 1448A / Race 6) (Pseudomonas syringae pv. phaseolicola (strain 1448A / Race 6))).